A 730-amino-acid chain; its full sequence is PWWP domain-containing protein 2A (730 aa).

A compositionally biased stretch (low complexity) spans 1 to 15; it reads MAAVAAEAAATAASP. Residues 1–134 form a disordered region; sequence MAAVAAEAAA…PPAGGDSAVS (134 aa). Over residues 66-77 the composition is skewed to pro residues; it reads PLPPPPPPPPPG. Phosphoserine is present on residues Ser-82 and Ser-99. The segment covering 91 to 108 has biased composition (pro residues); it reads PEPAAVPVSPPEQPPAAP. Residues 128-346 form an interaction with HDAC1 and MTA1 region; the sequence is GGDSAVSHLI…KLKTDHKVDG (219 aa). A Glycyl lysine isopeptide (Lys-Gly) (interchain with G-Cter in SUMO2) cross-link involves residue Lys-188. Disordered regions lie at residues 257 to 276, 311 to 355, and 409 to 531; these read YNQS…KRKM, IRKG…SQRR, and KEKA…LGKK. Positions 267–276 are enriched in basic residues; it reads RKIKRPKRKM. 2 stretches are compositionally biased toward basic and acidic residues: residues 311-329 and 341-354; these read IRKG…RRND and DHKV…ESQR. The interaction with the H2A.Z/H2AZ1 stretch occupies residues 396–547; that stretch reads MDHAKAREVL…SVYLTLNQET (152 aa). Residues 488-501 are compositionally biased toward low complexity; it reads SAGEAPSEKPSPSE. Residues 512–527 show a composition bias toward basic and acidic residues; sequence DTSRVRVPGEQEELRM. The region spanning 630–690 is the PWWP domain; sequence VGDIVWAKIY…LSQLSPFLEN (61 aa).

In terms of assembly, component of a MTA1-specific subcomplex of the NuRD complex (M1HR), which is composed of PWWP2A, MTA1/2, HDAC1/2, and RBBP4/7 but does not contain CHD4 and MBD3. Interacts with MTA1; the interaction mediates the association of PWWP2A with the M1HR complex. Interacts with H2A.Z/H2AZ1. Interacts (via PWWP domain) with histone H3 trimethylated at 'Lys-36' (H3K36me3). Does not interact with CHD4 and MBD3.

Its subcellular location is the nucleus. In terms of biological role, chromatin-binding protein that acts as an adapter between distinct nucleosome components (H3K36me3 or H2A.Z) and chromatin-modifying complexes, contributing to the regulation of the levels of histone acetylation at actively transcribed genes. Competes with CHD4 and MBD3 for interaction with MTA1 to form a NuRD subcomplex, preventing the formation of full NuRD complex (containing CHD4 and MBD3), leading to recruitment of HDACs to gene promoters resulting in turn in the deacetylation of nearby H3K27 and H2A.Z. Plays a role in facilitating transcriptional elongation and repression of spurious transcription initiation through regulation of histone acetylation. Essential for proper mitosis progression. In Mus musculus (Mouse), this protein is PWWP domain-containing protein 2A (Pwwp2a).